We begin with the raw amino-acid sequence, 638 residues long: 1-deoxy-D-xylulose-5-phosphate synthase (638 aa).

Residues His79 and Ala120–Ser122 contribute to the thiamine diphosphate site. Position 151 (Asp151) interacts with Mg(2+). Thiamine diphosphate is bound by residues Gly152–Ala153, Asn180, Tyr289, and Glu371. A Mg(2+)-binding site is contributed by Asn180.

Belongs to the transketolase family. DXPS subfamily. In terms of assembly, homodimer. Mg(2+) is required as a cofactor. Thiamine diphosphate serves as cofactor.

The enzyme catalyses D-glyceraldehyde 3-phosphate + pyruvate + H(+) = 1-deoxy-D-xylulose 5-phosphate + CO2. It participates in metabolic intermediate biosynthesis; 1-deoxy-D-xylulose 5-phosphate biosynthesis; 1-deoxy-D-xylulose 5-phosphate from D-glyceraldehyde 3-phosphate and pyruvate: step 1/1. Catalyzes the acyloin condensation reaction between C atoms 2 and 3 of pyruvate and glyceraldehyde 3-phosphate to yield 1-deoxy-D-xylulose-5-phosphate (DXP). This Rhizobium leguminosarum bv. trifolii (strain WSM2304) protein is 1-deoxy-D-xylulose-5-phosphate synthase.